Here is a 136-residue protein sequence, read N- to C-terminus: Large ribosomal subunit protein uL16 (136 aa).

The protein belongs to the universal ribosomal protein uL16 family. As to quaternary structure, part of the 50S ribosomal subunit.

In terms of biological role, binds 23S rRNA and is also seen to make contacts with the A and possibly P site tRNAs. This Enterobacter sp. (strain 638) protein is Large ribosomal subunit protein uL16.